The sequence spans 182 residues: UPF0149 protein CGSHiEE_07975 (182 aa).

It belongs to the UPF0149 family.

In Haemophilus influenzae (strain PittEE), this protein is UPF0149 protein CGSHiEE_07975.